The sequence spans 341 residues: Cell division protein FtsQ (341 aa).

At 1-126 the chain is on the cytoplasmic side; the sequence is MTETDEGAPV…VARGVVRGLK (126 aa). A helical transmembrane segment spans residues 127–147; the sequence is TLFATVMFSIAGFGLGLALYV. The Extracellular portion of the chain corresponds to 148-341; that stretch reads TPAMSVRNIV…VSSPDLPTVK (194 aa). One can recognise a POTRA domain in the interval 151–219; that stretch reads MSVRNIVVTG…SALRITIVER (69 aa).

This sequence belongs to the FtsQ/DivIB family. FtsQ subfamily.

It is found in the cell membrane. Essential cell division protein. The protein is Cell division protein FtsQ of Mycobacterium leprae (strain Br4923).